We begin with the raw amino-acid sequence, 148 residues long: Snaclec flavocetin-A subunit beta (148 aa).

Positions 1-23 are cleaved as a signal peptide; sequence MGQFIFVSFGFLVVATSLSGTEA. Intrachain disulfides connect Cys27-Cys38, Cys55-Cys144, and Cys121-Cys136. The region spanning 34–145 is the C-type lectin domain; that stretch reads YDEHCYQVFQ…CSSKRYVVCK (112 aa).

It belongs to the snaclec family. Tetramer of heterodimers of alpha and beta subunits (alphabeta)(4); disulfide-linked. Expressed by the venom gland.

The protein localises to the secreted. In terms of biological role, strong platelet aggregation inhibitor. Binds specifically to platelet glycoprotein Ibalpha (GP1BA) with high affinity and inhibits vWF-dependent platelet aggregation. Has also been observed to induce small agglutinates in washed platelets by binding to GPIb. The protein is Snaclec flavocetin-A subunit beta of Protobothrops flavoviridis (Habu).